The primary structure comprises 419 residues: Hyaluronan synthase (419 aa).

5 helical membrane passes run 8–28, 33–53, 318–338, 345–365, and 376–396; these read LIVL…MYLF, VGIY…LSFL, IVAL…VAIG, AIQL…IVAL, and PASF…LQPL.

Belongs to the NodC/HAS family. It depends on Mg(2+) as a cofactor.

Its subcellular location is the cell membrane. The enzyme catalyses [hyaluronan](n) + UDP-N-acetyl-alpha-D-glucosamine = N-acetyl-beta-D-glucosaminyl-(1-&gt;4)-[hyaluronan](n) + UDP + H(+). The catalysed reaction is N-acetyl-beta-D-glucosaminyl-(1-&gt;4)-[hyaluronan](n) + UDP-alpha-D-glucuronate = [hyaluronan](n+1) + UDP + H(+). It participates in glycan biosynthesis; hyaluronan biosynthesis. Its function is as follows. Glycosaminoglycan synthesis. The hyaluronic acid capsule is involved in the pathogenicity of group A Streptococci; it may be the major virulence determinant. The chain is Hyaluronan synthase (hasA) from Streptococcus pyogenes serotype M6 (strain ATCC BAA-946 / MGAS10394).